A 610-amino-acid polypeptide reads, in one-letter code: Isocitrate dehydrogenase kinase/phosphatase (610 aa).

ATP is bound by residues 359–365 (APGFKGT) and K380. D419 is an active-site residue.

The protein belongs to the AceK family.

It is found in the cytoplasm. It catalyses the reaction L-seryl-[isocitrate dehydrogenase] + ATP = O-phospho-L-seryl-[isocitrate dehydrogenase] + ADP + H(+). Bifunctional enzyme which can phosphorylate or dephosphorylate isocitrate dehydrogenase (IDH) on a specific serine residue. This is a regulatory mechanism which enables bacteria to bypass the Krebs cycle via the glyoxylate shunt in response to the source of carbon. When bacteria are grown on glucose, IDH is fully active and unphosphorylated, but when grown on acetate or ethanol, the activity of IDH declines drastically concomitant with its phosphorylation. This Rhodopseudomonas palustris (strain TIE-1) protein is Isocitrate dehydrogenase kinase/phosphatase.